A 1245-amino-acid polypeptide reads, in one-letter code: MLDASGCSWAMWTWALLQLLLLVGPGGCLNRQELFPFGPGQGDLELEAGDDVVSPSLELIGELSFYDRTDITSVYVTTNGIIAMSEPPATEYHPGTFPPSFGSVAPFLADLDTTDGLGNVYYREDLSPFIIQMAAEYVQRGFPEVSFQPTSVVVVTWESVAPYGGPSSSPAEEGKRNTFQAVLASSNSSSYAIFLYPEDGLQFFTTFSKKDESQVPAVVGFSKGLVGFLWKSNGAYNIFANDRESIENLAKSSNAGHQGVWVFEIGSPATAKGVVSADVNLDLDDDGADYEDEDYDLVTSHLGLEDVATPSPSHSPRRGYPDPHNVPRILSPGYEATERPRGVPTERTRSFQLPAERFPQHHPQVIDVDEVEETGVVFSYNTGSQQTCANNRHQCSVHAECRDYATGFCCRCVANYTGNGRQCVAEGSPQRVNGKVKGRIFVGSSQVPVVFENTDLHSYVVMNHGRSYTAISTIPETVGYSLLPLAPIGGIIGWMFAVEQDGFKNGFSITGGEFTRQAEVTFLGHPGKLVLKQQFSGIDEHGHLTISTELEGRVPQIPYGASVHIEPYTELYHYSSSVITSSSTREYTVMEPDQDGAAPSHTHIYQWRQTITFQECAHDDARPALPSTQQLSVDSVFVLYNKEERILRYALSNSIGPVRDGSPDALQNPCYIGTHGCDSNAACRPGPGTQFTCECSIGFRGDGQTCYDIDECSEQPSRCGNHAVCNNLPGTFRCECVEGYHFSDRGTCVAAEDQRPINYCETGLHNCDIPQRAQCIYMGGSSYTCSCLPGFSGDGRACRDVDECQHSRCHPDAFCYNTPGSFTCQCKPGYQGDGFRCMPGEVSKTRCQLEREHILGAAGGADAQRPTLQGMFVPQCDEYGHYVPTQCHHSTGYCWCVDRDGRELEGSRTPPGMRPPCLSTVAPPIHQGPVVPTAVIPLPPGTHLLFAQTGKIERLPLERNTMKKTEAKAFLHIPAKVIIGLAFDCVDKVVYWTDISEPSIGRASLHGGEPTTIIRQDLGSPEGIALDHLGRTIFWTDSQLDRIEVAKMDGTQRRVLFDTGLVNPRGIVTDPVRGNLYWTDWNRDNPKIETSHMDGTNRRILAQDNLGLPNGLTFDAFSSQLCWVDAGTHRAECLNPAQPGRRKVLEGLQYPFAVTSYGKNLYYTDWKTNSVIAMDLAISKEMDTFHPHKQTRLYGITIALSQCPQGHNYCSVNNGGCTHLCLPTPGSRTCRCPDNTLGVDCIERK.

Residues 1-28 form the signal peptide; sequence MLDASGCSWAMWTWALLQLLLLVGPGGC. The NIDO domain occupies 106–268; that stretch reads PFLADLDTTD…GVWVFEIGSP (163 aa). Asn187 carries an N-linked (GlcNAc...) asparagine glycan. A sulfotyrosine mark is found at Tyr290 and Tyr295. Thr299 carries O-linked (GalNAc...) threonine glycosylation. Positions 307-344 are disordered; the sequence is VATPSPSHSPRRGYPDPHNVPRILSPGYEATERPRGVP. An O-linked (GalNAc...) serine glycan is attached at Ser331. Thr337 and Thr345 each carry an O-linked (GalNAc...) threonine glycan. An O-linked (GalNAc...) threonine; partial glycan is attached at Thr348. Positions 384 to 424 constitute an EGF-like 1 domain; that stretch reads SQQTCANNRHQCSVHAECRDYATGFCCRCVANYTGNGRQCV. 19 disulfide bridges follow: Cys388–Cys401, Cys395–Cys410, Cys409–Cys616, Cys412–Cys423, Cys670–Cys683, Cys677–Cys693, Cys695–Cys706, Cys712–Cys725, Cys719–Cys734, Cys736–Cys748, Cys760–Cys775, Cys767–Cys785, Cys787–Cys798, Cys804–Cys815, Cys809–Cys824, Cys826–Cys837, Cys847–Cys876, Cys887–Cys894, and Cys896–Cys917. A glycan (N-linked (GlcNAc...) asparagine) is linked at Asn415. One can recognise a Nidogen G2 beta-barrel domain in the interval 428–665; the sequence is SPQRVNGKVK…GPVRDGSPDA (238 aa). An EGF-like 2 domain is found at 666-707; sequence LQNPCYIGTHGCDSNAACRPGPGTQFTCECSIGFRGDGQTCY. Residues 700–702 carry the Cell attachment site motif; the sequence is RGD. An EGF-like 3; calcium-binding domain is found at 708–749; the sequence is DIDECSEQPSRCGNHAVCNNLPGTFRCECVEGYHFSDRGTCV. An EGF-like 4 domain is found at 756-799; that stretch reads PINYCETGLHNCDIPQRAQCIYMGGSSYTCSCLPGFSGDGRACR. Residues 800-838 form the EGF-like 5; calcium-binding domain; sequence DVDECQHSRCHPDAFCYNTPGSFTCQCKPGYQGDGFRCM. A Thyroglobulin type-1 domain is found at 844 to 917; the sequence is KTRCQLEREH…RTPPGMRPPC (74 aa). Residues Thr920 and Thr933 are each glycosylated (O-linked (GalNAc...) threonine). LDL-receptor class B repeat units follow at residues 988–1030, 1031–1073, 1074–1118, and 1119–1160; these read KVVY…DHLG, RTIF…DPVR, GNLY…DAFS, and SQLC…YGKN. Positions 1206–1242 constitute an EGF-like 6 domain; the sequence is GHNYCSVNNGGCTHLCLPTPGSRTCRCPDNTLGVDCI. 3 disulfide bridges follow: Cys1210/Cys1221, Cys1217/Cys1230, and Cys1232/Cys1241.

In terms of assembly, interacts with FBLN1. Interacts with LGALS3BP. Interacts with PLXDC1. Interacts with SVEP1. Post-translationally, N- and O-glycosylated.

It localises to the secreted. The protein localises to the extracellular space. It is found in the extracellular matrix. The protein resides in the basement membrane. Its function is as follows. Sulfated glycoprotein widely distributed in basement membranes and tightly associated with laminin. Also binds to collagen IV and perlecan. It probably has a role in cell-extracellular matrix interactions. The sequence is that of Nidogen-1 (Nid1) from Mus musculus (Mouse).